A 552-amino-acid polypeptide reads, in one-letter code: Membrane protein insertase YidC (552 aa).

Residues 3–23 (TKRLILFVIFSFSILMLWDSW) traverse the membrane as a helical segment. A disordered region spans residues 29–65 (PPAASQTQTTAQSVEDGSVPQAAKSSASAANQASVPA). The next 4 helical transmembrane spans lie at 359–379 (WGVA…PLSA), 429–449 (LPIL…LGSV), 463–483 (LSAV…MIIQ), and 503–523 (PIVF…YWLV).

This sequence belongs to the OXA1/ALB3/YidC family. Type 1 subfamily. In terms of assembly, interacts with the Sec translocase complex via SecD. Specifically interacts with transmembrane segments of nascent integral membrane proteins during membrane integration.

Its subcellular location is the cell inner membrane. Required for the insertion and/or proper folding and/or complex formation of integral membrane proteins into the membrane. Involved in integration of membrane proteins that insert both dependently and independently of the Sec translocase complex, as well as at least some lipoproteins. Aids folding of multispanning membrane proteins. The chain is Membrane protein insertase YidC from Methylobacillus flagellatus (strain ATCC 51484 / DSM 6875 / VKM B-1610 / KT).